We begin with the raw amino-acid sequence, 333 residues long: 4-hydroxy-2-oxovalerate aldolase (333 aa).

The 251-residue stretch at 3 to 253 (ILINDSTLRD…NTGIDLYHFL (251 aa)) folds into the Pyruvate carboxyltransferase domain. Residue 11–12 (RD) participates in substrate binding. Aspartate 12 is a Mn(2+) binding site. The Proton acceptor role is filled by histidine 15. Residues serine 165 and histidine 192 each contribute to the substrate site. 2 residues coordinate Mn(2+): histidine 192 and histidine 194.

The protein belongs to the 4-hydroxy-2-oxovalerate aldolase family. In terms of assembly, interacts with MhpF.

The enzyme catalyses (S)-4-hydroxy-2-oxopentanoate = acetaldehyde + pyruvate. It participates in aromatic compound metabolism; 3-phenylpropanoate degradation. Functionally, catalyzes the retro-aldol cleavage of 4-hydroxy-2-oxopentanoate to pyruvate and acetaldehyde. Is involved in the meta-cleavage pathway for the degradation of aromatic compounds. This Serratia proteamaculans (strain 568) protein is 4-hydroxy-2-oxovalerate aldolase.